Reading from the N-terminus, the 494-residue chain is Serine/threonine-protein kinase PBL13 (494 aa).

The S-palmitoyl cysteine moiety is linked to residue Cys4. Thr65 is modified (phosphothreonine). The Protein kinase domain occupies Phe76 to Ile356. ATP contacts are provided by residues Leu82 to Val90 and Lys111. Tyr156 carries the phosphotyrosine modification. Asp206 functions as the Proton acceptor in the catalytic mechanism. Residue Ser210 is modified to Phosphoserine. At Ser240 the chain carries Phosphoserine; by autocatalysis. 2 positions are modified to phosphothreonine: Thr241 and Thr246. A Phosphotyrosine modification is found at Tyr254. A Phosphoserine; by autocatalysis modification is found at Ser321. Thr323 and Thr383 each carry phosphothreonine; by autocatalysis. Ser384 is modified (phosphoserine; by autocatalysis). 6 positions are modified to phosphothreonine; by autocatalysis: Thr395, Thr398, Thr406, Thr413, Thr421, and Thr428. Residue Ser429 is modified to Phosphoserine; by autocatalysis. Positions Asp434–Arg471 are disordered. Thr443 carries the post-translational modification Phosphothreonine; by autocatalysis. A compositionally biased stretch (polar residues) spans Thr443–Asp458. Residues Ser444 and Ser455 each carry the phosphoserine; by autocatalysis modification. Thr456 carries the phosphothreonine; by autocatalysis modification. The segment covering Lys462–Arg471 has biased composition (basic residues). Tyr481 is modified (phosphotyrosine; by autocatalysis).

Belongs to the protein kinase superfamily. Ser/Thr protein kinase family. Interacts with RBHOD. Interaction is disrupted by flagellin-induced immune signaling.

It localises to the cell membrane. It catalyses the reaction L-seryl-[protein] + ATP = O-phospho-L-seryl-[protein] + ADP + H(+). It carries out the reaction L-threonyl-[protein] + ATP = O-phospho-L-threonyl-[protein] + ADP + H(+). Its function is as follows. Involved in defense responses. Acts as a negative regulator of plant immune responses. The polypeptide is Serine/threonine-protein kinase PBL13 (Arabidopsis thaliana (Mouse-ear cress)).